A 634-amino-acid polypeptide reads, in one-letter code: Pentatricopeptide repeat-containing protein At5g14080 (634 aa).

PPR repeat units follow at residues 81–115, 116–150, 151–185, 186–220, 222–256, 257–291, 292–326, 327–360, 361–395, 396–430, 431–465, 466–500, and 501–535; these read DSIS…KILL, DSSV…GQEI, HPDV…GVSL, NTLG…NLNI, GSII…DCKP, DFMA…GVAP, RSSD…KFPM, DNDI…GKLP, AIRT…GYFS, ELQS…GLAP, DVSL…GCKM, NLTT…GIEP, and DETI…DHKT.

It belongs to the PPR family. P subfamily.

The chain is Pentatricopeptide repeat-containing protein At5g14080 from Arabidopsis thaliana (Mouse-ear cress).